Consider the following 475-residue polypeptide: Methyltransferase-like protein 25B (475 aa).

A coiled-coil region spans residues N185 to H210. The helical transmembrane segment at V406 to L426 threads the bilayer.

Belongs to the METTL25 family.

The protein resides in the membrane. The sequence is that of Methyltransferase-like protein 25B from Rattus norvegicus (Rat).